A 154-amino-acid polypeptide reads, in one-letter code: uncharacterized protein (154 aa).

The first 19 residues, 1–19, serve as a signal peptide directing secretion; the sequence is MWSLKSTLCIALLVTYSVA. 2 ShKT domains span residues 67-102 and 113-150; these read CADDPNTDCTQYTSLCSNAKYTPLLQQFCPKTCGFC and CVDSSTNCANWEKNGFCSSTFYDCANKKQYCAKTCKLC. 6 disulfide bridges follow: Cys-67-Cys-102, Cys-75-Cys-95, Cys-82-Cys-99, Cys-113-Cys-150, Cys-120-Cys-143, and Cys-129-Cys-147.

This is an uncharacterized protein from Caenorhabditis elegans.